The chain runs to 242 residues: Biosynthetic peptidoglycan transglycosylase (242 aa).

A helical transmembrane segment spans residues Leu19–Val39.

Belongs to the glycosyltransferase 51 family.

The protein localises to the cell inner membrane. It carries out the reaction [GlcNAc-(1-&gt;4)-Mur2Ac(oyl-L-Ala-gamma-D-Glu-L-Lys-D-Ala-D-Ala)](n)-di-trans,octa-cis-undecaprenyl diphosphate + beta-D-GlcNAc-(1-&gt;4)-Mur2Ac(oyl-L-Ala-gamma-D-Glu-L-Lys-D-Ala-D-Ala)-di-trans,octa-cis-undecaprenyl diphosphate = [GlcNAc-(1-&gt;4)-Mur2Ac(oyl-L-Ala-gamma-D-Glu-L-Lys-D-Ala-D-Ala)](n+1)-di-trans,octa-cis-undecaprenyl diphosphate + di-trans,octa-cis-undecaprenyl diphosphate + H(+). The protein operates within cell wall biogenesis; peptidoglycan biosynthesis. Its function is as follows. Peptidoglycan polymerase that catalyzes glycan chain elongation from lipid-linked precursors. In Escherichia coli O17:K52:H18 (strain UMN026 / ExPEC), this protein is Biosynthetic peptidoglycan transglycosylase.